Consider the following 493-residue polypeptide: Membrane-bound lytic murein transglycosylase F (493 aa).

Residues 1–21 (MKRLRFNYLLIGLITVLLALA) form the signal peptide. A non-LT domain region spans residues 22–268 (LWPSIPWYGG…RLDEKYLGHV (247 aa)). The tract at residues 269–493 (GTFDYVDTRT…LNPVSALPLP (225 aa)) is LT domain. The active site involves Glu313.

The protein in the N-terminal section; belongs to the bacterial solute-binding protein 3 family. This sequence in the C-terminal section; belongs to the transglycosylase Slt family.

It localises to the cell outer membrane. It carries out the reaction Exolytic cleavage of the (1-&gt;4)-beta-glycosidic linkage between N-acetylmuramic acid (MurNAc) and N-acetylglucosamine (GlcNAc) residues in peptidoglycan, from either the reducing or the non-reducing ends of the peptidoglycan chains, with concomitant formation of a 1,6-anhydrobond in the MurNAc residue.. In terms of biological role, murein-degrading enzyme that degrades murein glycan strands and insoluble, high-molecular weight murein sacculi, with the concomitant formation of a 1,6-anhydromuramoyl product. Lytic transglycosylases (LTs) play an integral role in the metabolism of the peptidoglycan (PG) sacculus. Their lytic action creates space within the PG sacculus to allow for its expansion as well as for the insertion of various structures such as secretion systems and flagella. The protein is Membrane-bound lytic murein transglycosylase F of Erwinia tasmaniensis (strain DSM 17950 / CFBP 7177 / CIP 109463 / NCPPB 4357 / Et1/99).